The following is a 1349-amino-acid chain: DNA-directed RNA polymerase subunit beta' (1349 aa).

Cys70, Cys72, Cys85, and Cys88 together coordinate Zn(2+). The Mg(2+) site is built by Asp460, Asp462, and Asp464. Zn(2+) contacts are provided by Cys801, Cys875, Cys882, and Cys885.

It belongs to the RNA polymerase beta' chain family. As to quaternary structure, the RNAP catalytic core consists of 2 alpha, 1 beta, 1 beta' and 1 omega subunit. When a sigma factor is associated with the core the holoenzyme is formed, which can initiate transcription. It depends on Mg(2+) as a cofactor. The cofactor is Zn(2+).

It catalyses the reaction RNA(n) + a ribonucleoside 5'-triphosphate = RNA(n+1) + diphosphate. Functionally, DNA-dependent RNA polymerase catalyzes the transcription of DNA into RNA using the four ribonucleoside triphosphates as substrates. In Desulfotalea psychrophila (strain LSv54 / DSM 12343), this protein is DNA-directed RNA polymerase subunit beta'.